A 555-amino-acid polypeptide reads, in one-letter code: Developmental and secondary metabolism regulator veA (555 aa).

Disordered stretches follow at residues 1–23 (MATRPPLSPPVNETEHSVSRITR), 39–60 (ERARACGAGAKSSADRRPVDPP), and 234–533 (RRRG…TLLS). Positions 13-23 (ETEHSVSRITR) are enriched in basic and acidic residues. A Velvet domain is found at 25-228 (GKRITYKLNV…AEQGCRVRIR (204 aa)). Residues 39–44 (ERARAC) carry the Nuclear localization signal motif. The segment covering 239–258 (KRSDDYDFDEERSHRGRIPD) has biased composition (basic and acidic residues). Over residues 311–331 (AIPPAPAPAPPSSSTPTPVAP) the composition is skewed to pro residues. Polar residues-rich tracts occupy residues 336–372 (RSSSYTSHLSFGATRTQYPAPQLPGTPQSATTPTQVY) and 380–389 (HARNPSTSTE). The PEST stretch occupies residues 439-479 (QTPSNAAPSLPPIASISAEYSNNLPQPPSNLAPSPNREPRG). 2 stretches are compositionally biased toward basic and acidic residues: residues 492–503 (RPHEDAFSHSER) and 519–533 (ADRRPSDVHRATLLS).

It belongs to the velvet family. VeA subfamily. Component of the heterotrimeric velvet complex composed of laeA, veA and velB; VeA acting as a bridging protein between laeA and velB.

The protein localises to the nucleus. The protein resides in the cytoplasm. Functionally, component of the velvet transcription factor complex that controls sexual/asexual developmental ratio in response to light, promoting sexual development in the darkness while stimulating asexual sporulation under illumination. The velvet complex hat acts as a global regulator for secondary metabolite gene expression. Increases spore dispersing capacity by impacting conidiophore architecture. In Aspergillus niger (strain ATCC 1015 / CBS 113.46 / FGSC A1144 / LSHB Ac4 / NCTC 3858a / NRRL 328 / USDA 3528.7), this protein is Developmental and secondary metabolism regulator veA.